The following is a 343-amino-acid chain: Tetraacyldisaccharide 4'-kinase (343 aa).

ATP is bound at residue 61 to 68; the sequence is GVGGNGKT.

This sequence belongs to the LpxK family.

It catalyses the reaction a lipid A disaccharide + ATP = a lipid IVA + ADP + H(+). The protein operates within glycolipid biosynthesis; lipid IV(A) biosynthesis; lipid IV(A) from (3R)-3-hydroxytetradecanoyl-[acyl-carrier-protein] and UDP-N-acetyl-alpha-D-glucosamine: step 6/6. Its function is as follows. Transfers the gamma-phosphate of ATP to the 4'-position of a tetraacyldisaccharide 1-phosphate intermediate (termed DS-1-P) to form tetraacyldisaccharide 1,4'-bis-phosphate (lipid IVA). In Colwellia psychrerythraea (strain 34H / ATCC BAA-681) (Vibrio psychroerythus), this protein is Tetraacyldisaccharide 4'-kinase.